Here is a 416-residue protein sequence, read N- to C-terminus: Ribosome biogenesis protein WDR12 homolog (416 aa).

Residues 7–89 (VQVRFFTKQK…ESVVEIEYLE (83 aa)) form a ubiquitin-like (UBL) domain region. WD repeat units follow at residues 101-138 (VHDDWVSSVSRCKNCIITGSYDNCVQIWDDQGSCLAKV), 140-184 (GHTS…ASCV), 189-228 (GHTQSVDSISINPSATKFCSGSWDKTLKLWSAVVNPEGGD), 259-297 (GHTQAVSSVVWMDRTTICSAGWDHCIRLWDAESGVNKQT), 299-338 (TGSKVFCEIAYSALNQCLASGSADKYIRLWDHRAEDGQVV), 344-384 (SHQG…TPLY), and 388-416 (GHQDKVMCVRWSSSRHLMSGGTDNQLILY). A disordered region spans residues 226 to 245 (GGDEGENGSLSKKQKTTGVK).

The protein belongs to the WD repeat WDR12/YTM1 family.

The protein localises to the nucleus. The protein resides in the nucleolus. It is found in the nucleoplasm. In terms of biological role, required for maturation of ribosomal RNAs and formation of the large ribosomal subunit. The sequence is that of Ribosome biogenesis protein WDR12 homolog from Nematostella vectensis (Starlet sea anemone).